Here is a 289-residue protein sequence, read N- to C-terminus: Oxaloacetate decarboxylase (289 aa).

Residue S50 participates in substrate binding. Mg(2+) is bound at residue D88. The substrate site is built by R159 and H235.

It belongs to the isocitrate lyase/PEP mutase superfamily. Oxaloacetate decarboxylase family. Homotetramer; dimer of dimers. Mg(2+) is required as a cofactor.

It carries out the reaction oxaloacetate + H(+) = pyruvate + CO2. Functionally, catalyzes the decarboxylation of oxaloacetate into pyruvate. Seems to play a role in maintaining cellular concentrations of bicarbonate and pyruvate. The polypeptide is Oxaloacetate decarboxylase (Pseudomonas putida (strain GB-1)).